The sequence spans 174 residues: ATP synthase subunit d, mitochondrial (174 aa).

At Ser2 the chain carries N-acetylserine.

This sequence belongs to the ATPase d subunit family.

The protein localises to the mitochondrion inner membrane. Functionally, mitochondrial membrane ATP synthase (F(1)F(0) ATP synthase or Complex V) produces ATP from ADP in the presence of a proton gradient across the membrane which is generated by electron transport complexes of the respiratory chain. F-type ATPases consist of two structural domains, F(1) - containing the extramembraneous catalytic core, and F(0) - containing the membrane proton channel, linked together by a central stalk and a peripheral stalk. During catalysis, ATP synthesis in the catalytic domain of F(1) is coupled via a rotary mechanism of the central stalk subunits to proton translocation. Part of the complex F(0) domain and the peripheric stalk, which acts as a stator to hold the catalytic alpha(3)beta(3) subcomplex and subunit a/ATP6 static relative to the rotary elements. The protein is ATP synthase subunit d, mitochondrial (ATP7) of Kluyveromyces lactis (strain ATCC 8585 / CBS 2359 / DSM 70799 / NBRC 1267 / NRRL Y-1140 / WM37) (Yeast).